A 618-amino-acid chain; its full sequence is Putative ATP-dependent DNA helicase Q1 (618 aa).

One can recognise a Helicase ATP-binding domain in the interval 95-270; that stretch reads INAVMSKEDA…KKMLGIPVAI (176 aa). 108–115 contacts ATP; that stretch reads LSTGGGKS. Residues 214-217 carry the DEVH box motif; it reads DEVH. In terms of domain architecture, Helicase C-terminal spans 295–443; it reads CVEKIVRTIK…NLYNMVRYAS (149 aa). 4 residues coordinate Zn(2+): C448, C466, C470, and C473. A disordered region spans residues 586-618; it reads KGRAEENNRKRKAAVTSSDEEVDVGDDDDVITL. A compositionally biased stretch (acidic residues) spans 603–618; sequence SDEEVDVGDDDDVITL.

This sequence belongs to the helicase family. RecQ subfamily. Zn(2+) is required as a cofactor.

It is found in the nucleus. The enzyme catalyses Couples ATP hydrolysis with the unwinding of duplex DNA by translocating in the 3'-5' direction.. It carries out the reaction ATP + H2O = ADP + phosphate + H(+). Functionally, DNA helicase that may play a role in the repair of DNA that is damaged by ultraviolet light or other mutagens. Exhibits a magnesium-dependent ATP-dependent DNA-helicase activity that unwinds single- and double-stranded DNA in a 3'-5' direction. The chain is Putative ATP-dependent DNA helicase Q1 from Caenorhabditis briggsae.